The sequence spans 130 residues: Small ribosomal subunit protein uS9 (130 aa).

Belongs to the universal ribosomal protein uS9 family.

In Haemophilus influenzae (strain ATCC 51907 / DSM 11121 / KW20 / Rd), this protein is Small ribosomal subunit protein uS9 (rpsI).